Consider the following 424-residue polypeptide: Serine--tRNA ligase (424 aa).

230-232 is an L-serine binding site; sequence TAE. 261–263 lines the ATP pocket; it reads RSE. Position 284 (E284) interacts with L-serine. Residue 348 to 351 participates in ATP binding; the sequence is EISS. Residue S384 participates in L-serine binding.

This sequence belongs to the class-II aminoacyl-tRNA synthetase family. Type-1 seryl-tRNA synthetase subfamily. In terms of assembly, homodimer. The tRNA molecule binds across the dimer.

Its subcellular location is the cytoplasm. It carries out the reaction tRNA(Ser) + L-serine + ATP = L-seryl-tRNA(Ser) + AMP + diphosphate + H(+). The enzyme catalyses tRNA(Sec) + L-serine + ATP = L-seryl-tRNA(Sec) + AMP + diphosphate + H(+). Its pathway is aminoacyl-tRNA biosynthesis; selenocysteinyl-tRNA(Sec) biosynthesis; L-seryl-tRNA(Sec) from L-serine and tRNA(Sec): step 1/1. Its function is as follows. Catalyzes the attachment of serine to tRNA(Ser). Is also able to aminoacylate tRNA(Sec) with serine, to form the misacylated tRNA L-seryl-tRNA(Sec), which will be further converted into selenocysteinyl-tRNA(Sec). In Streptococcus pneumoniae serotype 2 (strain D39 / NCTC 7466), this protein is Serine--tRNA ligase.